A 591-amino-acid polypeptide reads, in one-letter code: CTP synthase 1 (591 aa).

N6-acetyllysine is present on lysine 100. The Glutamine amidotransferase type-1 domain occupies 300–554 (SIALVGKYTK…LASVGRLSHY (255 aa)). Residues cysteine 399, histidine 526, and glutamate 528 each act as for GATase activity in the active site. A phosphoserine mark is found at serine 562, serine 568, serine 571, serine 573, serine 574, serine 575, serine 578, and serine 587. Residues 562-591 (SPRDTYSDRSGSSSPDSEITELKFPSINHD) form a disordered region. Low complexity predominate over residues 569 to 578 (DRSGSSSPDS).

The protein belongs to the CTP synthase family. Widely expressed.

The protein localises to the cytoplasm. It localises to the cytosol. It catalyses the reaction UTP + L-glutamine + ATP + H2O = CTP + L-glutamate + ADP + phosphate + 2 H(+). It participates in pyrimidine metabolism; CTP biosynthesis via de novo pathway; CTP from UDP: step 2/2. Activated by GTP and inhibited by CTP. Functionally, this enzyme is involved in the de novo synthesis of CTP, a precursor of DNA, RNA and phospholipids. Catalyzes the ATP-dependent amination of UTP to CTP with either L-glutamine or ammonia as a source of nitrogen. This enzyme and its product, CTP, play a crucial role in the proliferation of activated lymphocytes and therefore in immunity. The sequence is that of CTP synthase 1 from Homo sapiens (Human).